We begin with the raw amino-acid sequence, 153 residues long: D-aminoacyl-tRNA deacylase (153 aa).

The Gly-cisPro motif, important for rejection of L-amino acids signature appears at 137–138; it reads GP.

Belongs to the DTD family. Homodimer.

It localises to the cytoplasm. The enzyme catalyses glycyl-tRNA(Ala) + H2O = tRNA(Ala) + glycine + H(+). The catalysed reaction is a D-aminoacyl-tRNA + H2O = a tRNA + a D-alpha-amino acid + H(+). Its function is as follows. An aminoacyl-tRNA editing enzyme that deacylates mischarged D-aminoacyl-tRNAs. Also deacylates mischarged glycyl-tRNA(Ala), protecting cells against glycine mischarging by AlaRS. Acts via tRNA-based rather than protein-based catalysis; rejects L-amino acids rather than detecting D-amino acids in the active site. By recycling D-aminoacyl-tRNA to D-amino acids and free tRNA molecules, this enzyme counteracts the toxicity associated with the formation of D-aminoacyl-tRNA entities in vivo and helps enforce protein L-homochirality. The polypeptide is D-aminoacyl-tRNA deacylase (Dehalococcoides mccartyi (strain ATCC BAA-2266 / KCTC 15142 / 195) (Dehalococcoides ethenogenes (strain 195))).